The following is a 1649-amino-acid chain: eIF-2-alpha kinase GCN2 (1649 aa).

Disordered regions lie at residues 1 to 25 (MAGGRGAPGRGRDEPPESYPQRQDH), 138 to 158 (NKPPPKSFHEEMLERRAQEEQ), and 227 to 256 (HGGSPDFVGNGKHRANSSGRSRRERQYSVC). Residues 25 to 137 (HELQALEAIY…YHVQSFLSEH (113 aa)) enclose the RWD domain. Residues 146–205 (HEEMLERRAQEEQQRLLEAKRKEEQEQREILHEIQRRKEEIKEEKKRKEMAKQERLEIAS) adopt a coiled-coil conformation. Serine 230 is modified (phosphoserine). Residues 237-249 (GKHRANSSGRSRR) show a composition bias toward basic residues. Protein kinase domains lie at 296-539 (VYNA…HSFI) and 590-1001 (FEEL…SELL). ATP contacts are provided by residues 596-604 (LGKGAFGAV) and lysine 619. Disordered stretches follow at residues 660-750 (ERPA…QSFL) and 766-788 (ENSKSQNQDEDCNEKNGCHESEP). Residue threonine 667 is modified to Phosphothreonine. Residues 705-717 (LSSSVEWSTSGER) are compositionally biased toward polar residues. Residues 731 to 740 (SDDEDDDEDE) show a composition bias toward acidic residues. Basic and acidic residues predominate over residues 778–787 (NEKNGCHESE). Aspartate 848 (proton acceptor) is an active-site residue. Threonine 871 bears the Phosphothreonine mark. Phosphothreonine; by autocatalysis occurs at positions 899 and 904. Positions 1022-1493 (VDGKAYRTMM…DHVLQKLRTK (472 aa)) are histidyl-tRNA synthetase-like. N6-acetyllysine is present on lysine 1259.

This sequence belongs to the protein kinase superfamily. Ser/Thr protein kinase family. GCN2 subfamily. As to quaternary structure, homodimer; homodimerization is important for kinase activation by uncharged tRNAs. Interacts with GCN1; this interaction stimulates EIF2AK4/GCN2 kinase activity and is impaired by IMPACT upon a variety of stress conditions, such as amino acid depletion, UV-C irradiation, proteasome inhibitor treatment and glucose deprivation. Interacts with DNAJC3; this interaction inhibits EIF2AK4/GCN2 kinase activity during endoplasmic reticulum (ER), hypothermic and amino acid-starving stress conditions. Interacts with MAP3K20; activates EIF2AK4/GCN2 kinase activity in response to moderate ribotoxic stress. In terms of assembly, (Microbial infection) Interacts with hepatitis E virus (HEV) ORF1 protease; this interaction inhibits dimerization of EIF2AK4 and prevents EIF2AK4-mediated phosphorylation of EIF2A. Post-translationally, autophosphorylated; autophosphorylation on Thr-899 is increased upon amino acid starvation and in UV irradiation cells and inhibited in presence of IMPACT. In terms of tissue distribution, widely expressed. Expressed in lung, smooth muscle cells and macrophages.

The protein resides in the cytoplasm. The catalysed reaction is L-seryl-[protein] + ATP = O-phospho-L-seryl-[protein] + ADP + H(+). It carries out the reaction L-threonyl-[protein] + ATP = O-phospho-L-threonyl-[protein] + ADP + H(+). Its function is as follows. Metabolic-stress sensing protein kinase that phosphorylates the alpha subunit of eukaryotic translation initiation factor 2 (EIF2S1/eIF-2-alpha) in response to low amino acid availability. Plays a role as an activator of the integrated stress response (ISR) required for adaptation to amino acid starvation. EIF2S1/eIF-2-alpha phosphorylation in response to stress converts EIF2S1/eIF-2-alpha into a global protein synthesis inhibitor, leading to a global attenuation of cap-dependent translation, and thus to a reduced overall utilization of amino acids, while concomitantly initiating the preferential translation of ISR-specific mRNAs, such as the transcriptional activator ATF4, and hence allowing ATF4-mediated reprogramming of amino acid biosynthetic gene expression to alleviate nutrient depletion. Binds uncharged tRNAs. Required for the translational induction of protein kinase PRKCH following amino acid starvation. Involved in cell cycle arrest by promoting cyclin D1 mRNA translation repression after the unfolded protein response pathway (UPR) activation or cell cycle inhibitor CDKN1A/p21 mRNA translation activation in response to amino acid deprivation. Plays a role in the consolidation of synaptic plasticity, learning as well as formation of long-term memory. Plays a role in neurite outgrowth inhibition. Plays a proapoptotic role in response to glucose deprivation. Promotes global cellular protein synthesis repression in response to UV irradiation independently of the stress-activated protein kinase/c-Jun N-terminal kinase (SAPK/JNK) and p38 MAPK signaling pathways. Plays a role in the antiviral response against alphavirus infection; impairs early viral mRNA translation of the incoming genomic virus RNA, thus preventing alphavirus replication. Functionally, (Microbial infection) Plays a role in modulating the adaptive immune response to yellow fever virus infection; promotes dendritic cells to initiate autophagy and antigene presentation to both CD4(+) and CD8(+) T-cells under amino acid starvation. This chain is eIF-2-alpha kinase GCN2, found in Homo sapiens (Human).